Reading from the N-terminus, the 129-residue chain is Large ribosomal subunit protein bL12 (129 aa).

This sequence belongs to the bacterial ribosomal protein bL12 family. As to quaternary structure, homodimer. Part of the ribosomal stalk of the 50S ribosomal subunit. Forms a multimeric L10(L12)X complex, where L10 forms an elongated spine to which 2 to 4 L12 dimers bind in a sequential fashion. Binds GTP-bound translation factors.

Forms part of the ribosomal stalk which helps the ribosome interact with GTP-bound translation factors. Is thus essential for accurate translation. This chain is Large ribosomal subunit protein bL12, found in Solidesulfovibrio magneticus (strain ATCC 700980 / DSM 13731 / RS-1) (Desulfovibrio magneticus).